The following is a 104-amino-acid chain: N(4)-acetylcytidine amidohydrolase (104 aa).

The region spanning methionine 7 to glutamine 95 is the ASCH domain. Lysine 22 functions as the Proton acceptor in the catalytic mechanism. Residue threonine 25 is the Nucleophile of the active site. Glutamate 75 acts as the Proton donor in catalysis.

It belongs to the N(4)-acetylcytidine amidohydrolase family.

It carries out the reaction N(4)-acetylcytidine + H2O = cytidine + acetate + H(+). The enzyme catalyses N(4)-acetyl-2'-deoxycytidine + H2O = 2'-deoxycytidine + acetate + H(+). The catalysed reaction is N(4)-acetylcytosine + H2O = cytosine + acetate + H(+). Functionally, catalyzes the hydrolysis of N(4)-acetylcytidine (ac4C). This Vibrio atlanticus (strain LGP32) (Vibrio splendidus (strain Mel32)) protein is N(4)-acetylcytidine amidohydrolase.